Here is a 56-residue protein sequence, read N- to C-terminus: Conotoxin Cal6.41a (56 aa).

A signal peptide spans 1 to 23 (MSGSGAMLLGLLILVAMATSLDT). 3 disulfide bridges follow: C27–C41, C33–C50, and C40–C54.

As to expression, expressed by the venom duct.

Its subcellular location is the secreted. Its function is as follows. Probable neurotoxin. The sequence is that of Conotoxin Cal6.41a from Californiconus californicus (California cone).